We begin with the raw amino-acid sequence, 208 residues long: Dual specificity protein phosphatase 22-A (208 aa).

In terms of domain architecture, Tyrosine-protein phosphatase spans 4 to 144; sequence GMNKVIDGLY…LQEFQMKQVS (141 aa). Cys88 functions as the Phosphocysteine intermediate in the catalytic mechanism.

The protein belongs to the protein-tyrosine phosphatase family. Non-receptor class dual specificity subfamily.

The protein resides in the cytoplasm. It is found in the nucleus. The enzyme catalyses O-phospho-L-tyrosyl-[protein] + H2O = L-tyrosyl-[protein] + phosphate. The catalysed reaction is O-phospho-L-seryl-[protein] + H2O = L-seryl-[protein] + phosphate. It catalyses the reaction O-phospho-L-threonyl-[protein] + H2O = L-threonyl-[protein] + phosphate. Functionally, activates the Jnk signaling pathway. Dephosphorylates and deactivates p38 and stress-activated protein kinase/c-Jun N-terminal kinase (SAPK/JNK). The protein is Dual specificity protein phosphatase 22-A of Danio rerio (Zebrafish).